The chain runs to 337 residues: G-protein coupled receptor 26 (337 aa).

Topologically, residues 1–10 (MNSWDAGLAG) are extracellular. Residues 11-31 (LLVGTIGVSLLSNGLVLLCLL) form a helical membrane-spanning segment. Topologically, residues 32–47 (HSADIRRQAPALFTLN) are cytoplasmic. The chain crosses the membrane as a helical span at residues 48–68 (LTCGNLLCTVVNMPLTLAGVV). Topologically, residues 69–81 (AQRQPAGDRLCRL) are extracellular. A disulfide bridge connects residues Cys-79 and Cys-156. Residues 82 to 102 (AAFLDTFLAANSMLSMAALSI) form a helical membrane-spanning segment. Residues 103-123 (DRWVAVVFPLSYRAKMRLRDA) lie on the Cytoplasmic side of the membrane. The helical transmembrane segment at 124-144 (AFMVAYTWLHALTFPATALAL) threads the bilayer. At 145-168 (SWLGFHQLYASCTLCSRRPDERLR) the chain is on the extracellular side. A helical membrane pass occupies residues 169-189 (FAVFTSAFHALSFLLSFIVLC). Topologically, residues 190–245 (FTYLKVLKVARFHCKRIDVITMQTLVLLVDIHPSVRERCLEEQKRRRQRATKKIST) are cytoplasmic. A helical membrane pass occupies residues 246-266 (FIGTFLVCFAPYVITRLVELF). Topologically, residues 267-276 (STAPIDSHWG) are extracellular. The chain crosses the membrane as a helical span at residues 277 to 297 (VLSKCLAYSKAASDPFVYSLL). Residues 298 to 337 (RHQYRRSCKELLNRIFNRRSIHSVGLTGDSHSQNILPVSE) lie on the Cytoplasmic side of the membrane.

This sequence belongs to the G-protein coupled receptor 1 family. In terms of tissue distribution, detected in extracts of several brain regions including striatum, pons, cerebellum and cortex. Not detected in numerous peripheral tissue extracts, except in testis. In the brain, detected in cortical structures including the anterior cingulate area, posterior cingulate and the frontoparietal, somatosensory and piriform cortices. Prominent also in the olfactory tubercle, the islands of Calleja, ventromedial and posterior nuclei of the hypothalamus, the medial septal nucleus, nucleus of the diagonal band and the ventral tegmental area. Localized also to hippocampal structures, with signals strongest over the CA2 and CA3 regions of Ammon's horn and less so over the dentate gyrus. Expressed in the caudate putamen only in its most caudal portion, with a decreasing gradient of signal from the dorsal to ventral aspect. Strong expression associated with a single pontine structure, the inferior olivary nucleus.

It is found in the cell membrane. Its function is as follows. Orphan receptor. Displays a significant level of constitutive activity. Its effect is mediated by G(s)-alpha protein that stimulate adenylate cyclase, resulting in an elevation of intracellular cAMP. The chain is G-protein coupled receptor 26 (Gpr26) from Rattus norvegicus (Rat).